The sequence spans 380 residues: MRSASILSAALAAFAPLASAADAVSGAAEGFAKGVTGGGSATPVYPSTTAELASYLKDSSARVIVLTKTFDFTGTEGTTTETGCAPYGTAAACQVAINKDNWCTNYQPNAPKVSVSYDKAPFNPLIVGSNKSLIGQGSKGVIKGKGLRITNSAKNVIIQNIHITNLNPKYVWGGDAISLDGTDLVWFDHVKTSLIGRQHIVLGNGASNRVTISNNEIDGSTSWSATCDNHHYWGVYLTGSNDMVTFSKNYIHHTSGRSPKIAGNSLVHISGNYFYANSGHAMEADAGAKVVLEGNVFQNVVAAMQSGLAGKVFSSPDANTNAQCSSYLGHTCQLNAYGSSGSLSGSDTSILSSFSGKNVAATVTANDAKNVPNTAGFGKI.

A signal peptide spans 1–20 (MRSASILSAALAAFAPLASA). Asn-130 carries N-linked (GlcNAc...) asparagine glycosylation.

The protein belongs to the polysaccharide lyase 1 family.

Its subcellular location is the secreted. It carries out the reaction Eliminative cleavage of (1-&gt;4)-alpha-D-galacturonan methyl ester to give oligosaccharides with 4-deoxy-6-O-methyl-alpha-D-galact-4-enuronosyl groups at their non-reducing ends.. The protein is Pectin lyase (PNLA) of Colletotrichum gloeosporioides (Anthracnose fungus).